The sequence spans 529 residues: Calcium/calmodulin-dependent protein kinase type II subunit gamma (529 aa).

One can recognise a Protein kinase domain in the interval 14–272 (YQLFEELGKG…ADQALKHPWV (259 aa)). ATP is bound by residues 20-28 (LGKGAFSVV) and Lys-43. Asp-136 serves as the catalytic Proton acceptor. An autoinhibitory domain region spans residues 283 to 292 (HRQETVECLR). Phosphothreonine; by autocatalysis occurs at positions 287, 306, and 307. Residues 294–316 (FNARRKLKGAILTTMLVSRNFSA) form a calmodulin-binding region. Phosphoserine occurs at positions 311, 334, 349, 352, and 455. A disordered region spans residues 324–353 (KSDGGVKKRKSSSSVHLMPQSNNKNSLVSP). Over residues 342 to 352 (PQSNNKNSLVS) the composition is skewed to polar residues.

It belongs to the protein kinase superfamily. CAMK Ser/Thr protein kinase family. CaMK subfamily. CAMK2 is composed of 4 different chains: alpha (CAMK2A), beta (CAMK2B), gamma (CAMK2G), and delta (CAMK2D). The different isoforms assemble into homo- or heteromultimeric holoenzymes composed of 12 subunits with two hexameric rings stacked one on top of the other. Autophosphorylation of Thr-287 following activation by Ca(2+)/calmodulin. Phosphorylation of Thr-287 locks the kinase into an activated state.

The protein localises to the sarcoplasmic reticulum membrane. The enzyme catalyses L-seryl-[protein] + ATP = O-phospho-L-seryl-[protein] + ADP + H(+). The catalysed reaction is L-threonyl-[protein] + ATP = O-phospho-L-threonyl-[protein] + ADP + H(+). With respect to regulation, activated by Ca(2+)/calmodulin. Binding of calmodulin results in conformational change that relieves intrasteric autoinhibition and allows autophosphorylation of Thr-287 which turns the kinase in a constitutively active form and confers to the kinase a Ca(2+)-independent activity. Calcium/calmodulin-dependent protein kinase that functions autonomously after Ca(2+)/calmodulin-binding and autophosphorylation, and is involved in sarcoplasmic reticulum Ca(2+) transport in skeletal muscle and may function in dendritic spine and synapse formation and neuronal plasticity. In slow-twitch muscles, is involved in regulation of sarcoplasmic reticulum (SR) Ca(2+) transport and in fast-twitch muscle participates in the control of Ca(2+) release from the SR through phosphorylation of the ryanodine receptor-coupling factor triadin. In the central nervous system, it is involved in the regulation of neurite formation and arborization. It may participate in the promotion of dendritic spine and synapse formation and maintenance of synaptic plasticity which enables long-term potentiation (LTP) and hippocampus-dependent learning. In response to interferon-gamma (IFN-gamma) stimulation, catalyzes phosphorylation of STAT1, stimulating the JAK-STAT signaling pathway. In Mus musculus (Mouse), this protein is Calcium/calmodulin-dependent protein kinase type II subunit gamma (Camk2g).